Reading from the N-terminus, the 299-residue chain is Protease HtpX homolog (299 aa).

A run of 2 helical transmembrane segments spans residues Ile-15–Phe-35 and Gly-39–Phe-59. His-143 is a binding site for Zn(2+). Glu-144 is an active-site residue. His-147 contacts Zn(2+). 2 helical membrane-spanning segments follow: residues Ile-158–Trp-178 and Ile-198–Val-218. Glu-227 contacts Zn(2+).

Belongs to the peptidase M48B family. Requires Zn(2+) as cofactor.

The protein localises to the cell membrane. The protein is Protease HtpX homolog of Streptococcus pneumoniae (strain Taiwan19F-14).